A 600-amino-acid chain; its full sequence is Proton channel OTOP1 (600 aa).

A disordered region spans residues 1-50; sequence MPGGPGAPSSPAASSGSSRAAPSGIAACPLSPPPLARGSPQASGPRRGAS. Over 1–56 the chain is Cytoplasmic; the sequence is MPGGPGAPSSPAASSGSSRAAPSGIAACPLSPPPLARGSPQASGPRRGASVPQKLA. The span at 7–27 shows a compositional bias: low complexity; it reads APSSPAASSGSSRAAPSGIAA. Residues 57–78 form a helical membrane-spanning segment; the sequence is ETLSSQYGLNVFVAGLLFLLAW. Topologically, residues 79–86 are extracellular; it reads AVHATGVG. A helical membrane pass occupies residues 87 to 110; the sequence is KSDLLCVLTALMLLQLLWMLWYVG. Topologically, residues 111–128 are cytoplasmic; that stretch reads RSYMQRRLIRPKDTHAGA. The helical transmembrane segment at 129–151 threads the bilayer; it reads RWLRGSITLFAFITVVLGCLKVA. Residues 152 to 161 are Extracellular-facing; it reads YFIGFSECLS. Residues 162–186 traverse the membrane as a helical segment; the sequence is ATEGVFPVTHAVHTLLQVYFLWGHA. Topologically, residues 187–194 are cytoplasmic; sequence KDIIMSFK. Residues 195 to 217 traverse the membrane as a helical segment; sequence TLERFGVIHSVFTNLLLWANSVL. The Extracellular segment spans residues 218 to 262; that stretch reads NESKHQLNEHKERLITLGFGNITIVLDDHTPQCNCTPPALCSALS. Residues 263 to 288 traverse the membrane as a helical segment; sequence HGIYYLYPFNIEYQILASTMLYVLWK. At 289–309 the chain is on the cytoplasmic side; it reads NIGRRVDSSQHQKMQCRFDGV. The helical transmembrane segment at 310–332 threads the bilayer; sequence LVGSVLGLTVLAATIAVVVVYMI. The Extracellular portion of the chain corresponds to 333-342; the sequence is HIGRSKSKSE. Residues 343 to 368 form a helical membrane-spanning segment; that stretch reads SALIMFYLYAITVLLLMGAAGLVGSW. The Cytoplasmic segment spans residues 369–386; the sequence is IYRVDEKSLDESKNPARK. A helical membrane pass occupies residues 387–411; it reads LDVDLLVATGSGSWLLSWGSILAIA. The Extracellular portion of the chain corresponds to 412–421; that stretch reads CAETRPPYTW. A helical membrane pass occupies residues 422-442; it reads YNLPYSVLVIVEKYVQNIFII. Over 443 to 532 the chain is Cytoplasmic; sequence ESVHLEPEGV…QGGMKRRLLR (90 aa). The chain crosses the membrane as a helical span at residues 533–551; the sequence is NITAFLFLCNISLWIPPAF. Over 552–569 the chain is Extracellular; the sequence is GCRPEYDNGLEEIVFGFE. The chain crosses the membrane as a helical span at residues 570 to 593; sequence PWIIVVNLAMPFSIFYRMHAAAAL. Topologically, residues 594 to 600 are cytoplasmic; it reads FEVYCKI.

The protein belongs to the otopetrin family. As to quaternary structure, homodimer. Interacts with STAT1, independently of STAT1 phosphorylation status. Expressed in thymus, heart, kidney, skin, vestibular system of the inner ear, sour taste cells, heart, uterus, dorsal root ganglion, adrenal gland, lactating mammary gland and stimulated mast cells. In the inner ear, expressed in the supporting cells in extrastriolar regions of the saccule and in the utricle, but not in the cochlea. Expressed in brown adipose tissue. Expressed in epididymal white adipose tissue (eWAT), as well as in inguinal fat, in obese animals, but hardly detectable in eWAT from lean mice. Expressed in acid-sensing taste receptor cells (PKD2L1-positive cells), but not in other types of taste cells (at protein level).

Its subcellular location is the cell membrane. The protein resides in the cell projection. It localises to the microvillus. It carries out the reaction H(+)(in) = H(+)(out). Its activity is regulated as follows. Activated by both acid and alkali, with proton influx in response to extracellular acid and proton efflux during alkali stimulation. Inhibited by Zn(2+); this inhibition is thought to be pH-sensitive. Currents evoked in response to mild acid (pH 6.0) stimulus may also be mildly potentiated by exposure to Zn(2+). Activated by NH(4)Cl. Proton-selective ion channel. Biphasically modulated by acid and alkali, mediating proton influx and efflux in response to extracellular acid and base stimulation, respectively. Sour taste receptor, which carries inward currents in response to extracellular acidification. Sensor for ammonium chloride (NH(4)Cl) in taste receptor cells. NH(4)Cl acts by increasing the intracellular pH, thereby generating a driving force for proton entry through OTOP1 channel. Might also participate in alkaline sensation. Plays a role in the regulation of Ca(2+) flux in response to purigenic (ATP, ADP and UDP) stimuli, leading to increase in cytosolic Ca(2+) due to influx of extracellular calcium. May play this role by inhibiting P2Y purinoceptor-mediated Ca(2+) release in a Ca(2+)-dependent manner and promote an influx of Ca(2+) in response to ATP. Through this mechanism and possibly others, plays a role in the formation and function of calcium carbonate-based structures in the vestibular system of the inner ear, called otoconia, that sense gravity and linear acceleration. In obesity, may attenuate adipose tissue inflammation, through the negative regulation of IFNG signaling, hence may play an adaptive role in the maintainance of metabolic homeostasis. Following alkali activation, may also be permeable Na(+), K(+), Cs(+) and Li(+). This chain is Proton channel OTOP1, found in Mus musculus (Mouse).